A 219-amino-acid chain; its full sequence is Thiopurine S-methyltransferase (219 aa).

The S-adenosyl-L-methionine site is built by Trp10, Leu45, Glu66, and Arg123.

Belongs to the class I-like SAM-binding methyltransferase superfamily. TPMT family.

It localises to the cytoplasm. It carries out the reaction S-adenosyl-L-methionine + a thiopurine = S-adenosyl-L-homocysteine + a thiopurine S-methylether.. In Bordetella bronchiseptica (strain ATCC BAA-588 / NCTC 13252 / RB50) (Alcaligenes bronchisepticus), this protein is Thiopurine S-methyltransferase.